A 390-amino-acid polypeptide reads, in one-letter code: Homoserine O-succinyltransferase (390 aa).

Residues 59-369 (NAVLVCHALN…PHGHDAFLLD (311 aa)) enclose the AB hydrolase-1 domain. The active-site Nucleophile is Ser-165. Arg-235 contacts substrate. Residues Asp-330 and His-363 contribute to the active site. Asp-364 serves as a coordination point for substrate.

The protein belongs to the AB hydrolase superfamily. MetX family. Homodimer.

The protein localises to the cytoplasm. It carries out the reaction L-homoserine + succinyl-CoA = O-succinyl-L-homoserine + CoA. The protein operates within amino-acid biosynthesis; L-methionine biosynthesis via de novo pathway; O-succinyl-L-homoserine from L-homoserine: step 1/1. In terms of biological role, transfers a succinyl group from succinyl-CoA to L-homoserine, forming succinyl-L-homoserine. This Cupriavidus metallidurans (strain ATCC 43123 / DSM 2839 / NBRC 102507 / CH34) (Ralstonia metallidurans) protein is Homoserine O-succinyltransferase.